The following is a 65-amino-acid chain: Large ribosomal subunit protein bL35 (65 aa).

It belongs to the bacterial ribosomal protein bL35 family.

The polypeptide is Large ribosomal subunit protein bL35 (Nitrosomonas eutropha (strain DSM 101675 / C91 / Nm57)).